A 327-amino-acid chain; its full sequence is GTPase Obg (327 aa).

Residues 1-159 enclose the Obg domain; it reads MQFIDQANII…WEVQLELKLL (159 aa). Positions 160-327 constitute an OBG-type G domain; it reads AEVGIIGLPN…SLLSEVWNRI (168 aa). Residues 166-173, 191-195, 213-216, 280-283, and 309-311 each bind ATP; these read GLPNAGKS, FTTLI, DIPG, NKKE, and SSA. 2 residues coordinate Mg(2+): serine 173 and threonine 193.

Belongs to the TRAFAC class OBG-HflX-like GTPase superfamily. OBG GTPase family. In terms of assembly, monomer. The cofactor is Mg(2+).

It is found in the cytoplasm. An essential GTPase which binds GTP, GDP and possibly (p)ppGpp with moderate affinity, with high nucleotide exchange rates and a fairly low GTP hydrolysis rate. Plays a role in control of the cell cycle, stress response, ribosome biogenesis and in those bacteria that undergo differentiation, in morphogenesis control. This chain is GTPase Obg, found in Prochlorococcus marinus (strain MIT 9515).